Consider the following 79-residue polypeptide: Protein OPG051 (79 aa).

Belongs to the orthopoxvirus OPG051 family.

This Variola virus (isolate Human/India/Ind3/1967) (VARV) protein is Protein OPG051 (OPG051).